Reading from the N-terminus, the 258-residue chain is Deoxyribose-phosphate aldolase (258 aa).

D102 functions as the Proton donor/acceptor in the catalytic mechanism. Catalysis depends on K165, which acts as the Schiff-base intermediate with acetaldehyde. The active-site Proton donor/acceptor is the K199.

It belongs to the DeoC/FbaB aldolase family. DeoC type 2 subfamily.

The protein localises to the cytoplasm. The enzyme catalyses 2-deoxy-D-ribose 5-phosphate = D-glyceraldehyde 3-phosphate + acetaldehyde. Its pathway is carbohydrate degradation; 2-deoxy-D-ribose 1-phosphate degradation; D-glyceraldehyde 3-phosphate and acetaldehyde from 2-deoxy-alpha-D-ribose 1-phosphate: step 2/2. In terms of biological role, catalyzes a reversible aldol reaction between acetaldehyde and D-glyceraldehyde 3-phosphate to generate 2-deoxy-D-ribose 5-phosphate. This chain is Deoxyribose-phosphate aldolase, found in Aliivibrio fischeri (strain MJ11) (Vibrio fischeri).